The sequence spans 94 residues: Phormicin (94 aa).

The signal sequence occupies residues 1-23 (MKFFMVFVVTFCLAVCFVSQSLA). Residues 24–54 (IPADAANDAHFVDGVQALKEIEPELHGRYKR) constitute a propeptide that is removed on maturation. Intrachain disulfides connect Cys57/Cys84, Cys70/Cys90, and Cys74/Cys92.

Belongs to the invertebrate defensin family. Type 1 subfamily.

It is found in the secreted. Its function is as follows. Responsible for the anti Gram-positive activity of immune hemolymph of P.terraenovae. The sequence is that of Phormicin from Protophormia terraenovae (Northern blowfly).